The sequence spans 97 residues: Eotaxin (97 aa).

A signal peptide spans 1–23 (MQLSTALLFLLLTATSFTSQVLA). 2 disulfide bridges follow: Cys-32–Cys-57 and Cys-33–Cys-73. Thr-94 is a glycosylation site (O-linked (GalNAc...) threonine).

Belongs to the intercrine beta (chemokine CC) family.

It is found in the secreted. In response to the presence of allergens, this protein directly promotes the accumulation of eosinophils (a prominent feature of allergic inflammatory reactions), but not lymphocytes, macrophages or neutrophils. Binds to CCR3. In Rattus norvegicus (Rat), this protein is Eotaxin (Ccl11).